A 74-amino-acid polypeptide reads, in one-letter code: uncharacterized protein (74 aa).

This is an uncharacterized protein from Homo sapiens (Human).